The following is a 77-amino-acid chain: Putative defensin-like protein 158 (77 aa).

Residues 1-24 (MANISWSHFLILMLVFSVVKKGKG) form the signal peptide. 4 disulfides stabilise this stretch: cysteine 31/cysteine 77, cysteine 41/cysteine 60, cysteine 46/cysteine 71, and cysteine 50/cysteine 73.

This sequence belongs to the DEFL family.

Its subcellular location is the secreted. The chain is Putative defensin-like protein 158 (LCR23) from Arabidopsis thaliana (Mouse-ear cress).